A 332-amino-acid polypeptide reads, in one-letter code: Transaldolase (332 aa).

The active-site Schiff-base intermediate with substrate is Lys135.

This sequence belongs to the transaldolase family. Type 1 subfamily. Homodimer.

The protein resides in the cytoplasm. It carries out the reaction D-sedoheptulose 7-phosphate + D-glyceraldehyde 3-phosphate = D-erythrose 4-phosphate + beta-D-fructose 6-phosphate. The protein operates within carbohydrate degradation; pentose phosphate pathway; D-glyceraldehyde 3-phosphate and beta-D-fructose 6-phosphate from D-ribose 5-phosphate and D-xylulose 5-phosphate (non-oxidative stage): step 2/3. Its function is as follows. Transaldolase is important for the balance of metabolites in the pentose-phosphate pathway. This chain is Transaldolase, found in Prochlorococcus marinus (strain NATL1A).